Consider the following 375-residue polypeptide: Chaperone protein DnaJ (375 aa).

The region spanning 5–70 (DYYEVLGVNR…QKKGAYDRYG (66 aa)) is the J domain. The segment at 134–212 (GAEKTIRIPT…CGGAGRVKKQ (79 aa)) adopts a CR-type zinc-finger fold. The Zn(2+) site is built by C147, C150, C164, C167, C186, C189, C200, and C203. CXXCXGXG motif repeat units lie at residues 147-154 (CGTCHGSG), 164-171 (CPTCGGAG), 186-193 (CPKCHGTG), and 200-207 (CGDCGGAG).

Belongs to the DnaJ family. As to quaternary structure, homodimer. The cofactor is Zn(2+).

It is found in the cytoplasm. Participates actively in the response to hyperosmotic and heat shock by preventing the aggregation of stress-denatured proteins and by disaggregating proteins, also in an autonomous, DnaK-independent fashion. Unfolded proteins bind initially to DnaJ; upon interaction with the DnaJ-bound protein, DnaK hydrolyzes its bound ATP, resulting in the formation of a stable complex. GrpE releases ADP from DnaK; ATP binding to DnaK triggers the release of the substrate protein, thus completing the reaction cycle. Several rounds of ATP-dependent interactions between DnaJ, DnaK and GrpE are required for fully efficient folding. Also involved, together with DnaK and GrpE, in the DNA replication of plasmids through activation of initiation proteins. In Azoarcus sp. (strain BH72), this protein is Chaperone protein DnaJ.